A 317-amino-acid polypeptide reads, in one-letter code: MDSQPQSKKAARGADKTARNPIPIIPAPTERLPKPQWLRVRSPLSPEVDQLKKILRDAALHTVCEEASCPNLGECFGGGTATFMILGDICTRRCPFCDVAHGRPEAPDPLESVHLARTVASMKLRFVVITSVDRDDLRDGGARHFAEVISALREHCPELHVEILVPDFRGRVANALAAFRETPPDVFNHNLETVPRLYLQARPGADYHHSLQLLAAFKAQHPQIPTKSGLMLGLGEEIDEIRGVMRDLRQAGCELLTIGQYLAPSRHHLPVARFVPPEEFQQLQRDGMAMGFRHVASGPLVRSSYHAERSFHEIGGD.

Residues 1–28 (MDSQPQSKKAARGADKTARNPIPIIPAP) are disordered. The [4Fe-4S] cluster site is built by Cys-64, Cys-69, Cys-75, Cys-90, Cys-94, Cys-97, and Ser-304. A Radical SAM core domain is found at 76-293 (FGGGTATFMI…QRDGMAMGFR (218 aa)).

Belongs to the radical SAM superfamily. Lipoyl synthase family. [4Fe-4S] cluster serves as cofactor.

The protein resides in the cytoplasm. It catalyses the reaction [[Fe-S] cluster scaffold protein carrying a second [4Fe-4S](2+) cluster] + N(6)-octanoyl-L-lysyl-[protein] + 2 oxidized [2Fe-2S]-[ferredoxin] + 2 S-adenosyl-L-methionine + 4 H(+) = [[Fe-S] cluster scaffold protein] + N(6)-[(R)-dihydrolipoyl]-L-lysyl-[protein] + 4 Fe(3+) + 2 hydrogen sulfide + 2 5'-deoxyadenosine + 2 L-methionine + 2 reduced [2Fe-2S]-[ferredoxin]. Its pathway is protein modification; protein lipoylation via endogenous pathway; protein N(6)-(lipoyl)lysine from octanoyl-[acyl-carrier-protein]: step 2/2. Catalyzes the radical-mediated insertion of two sulfur atoms into the C-6 and C-8 positions of the octanoyl moiety bound to the lipoyl domains of lipoate-dependent enzymes, thereby converting the octanoylated domains into lipoylated derivatives. This is Lipoyl synthase from Acidithiobacillus ferrooxidans (strain ATCC 23270 / DSM 14882 / CIP 104768 / NCIMB 8455) (Ferrobacillus ferrooxidans (strain ATCC 23270)).